A 185-amino-acid chain; its full sequence is MATGPRYKVPMRRRREVRTDYHQRLRLLKSGKPRLVARVSNAHVRAQLVTPGSDGDETHAAASSEELGEYGWDAPTGNLPSAYLTGYLAGARAVDAGLDEAVLDIGLNTATPGNKTFAVQEGAIDAGLEIPHNDDVLADWSRTRGEHIAAYAEQLDEPLYSGDFDAADLPEHFDDVLATIQEDHE.

The protein belongs to the universal ribosomal protein uL18 family. In terms of assembly, part of the 50S ribosomal subunit. Contacts the 5S and 23S rRNAs.

Its function is as follows. This is one of the proteins that bind and probably mediate the attachment of the 5S RNA into the large ribosomal subunit, where it forms part of the central protuberance. This is Large ribosomal subunit protein uL18 from Halorubrum lacusprofundi (strain ATCC 49239 / DSM 5036 / JCM 8891 / ACAM 34).